Reading from the N-terminus, the 278-residue chain is Large ribosomal subunit protein uL2 (278 aa).

The tract at residues 201–278 is disordered; it reads HGNINDGKAG…IMRSRHQRKK (78 aa). The span at 210–221 shows a compositional bias: basic residues; that stretch reads GRSRWRGKRPHV.

It belongs to the universal ribosomal protein uL2 family. As to quaternary structure, part of the 50S ribosomal subunit. Forms a bridge to the 30S subunit in the 70S ribosome.

One of the primary rRNA binding proteins. Required for association of the 30S and 50S subunits to form the 70S ribosome, for tRNA binding and peptide bond formation. It has been suggested to have peptidyltransferase activity; this is somewhat controversial. Makes several contacts with the 16S rRNA in the 70S ribosome. This is Large ribosomal subunit protein uL2 from Agrobacterium fabrum (strain C58 / ATCC 33970) (Agrobacterium tumefaciens (strain C58)).